A 302-amino-acid polypeptide reads, in one-letter code: Glycine--tRNA ligase alpha subunit (302 aa).

Belongs to the class-II aminoacyl-tRNA synthetase family. Tetramer of two alpha and two beta subunits.

It is found in the cytoplasm. It carries out the reaction tRNA(Gly) + glycine + ATP = glycyl-tRNA(Gly) + AMP + diphosphate. The polypeptide is Glycine--tRNA ligase alpha subunit (Psychromonas ingrahamii (strain DSM 17664 / CCUG 51855 / 37)).